We begin with the raw amino-acid sequence, 236 residues long: 2,3,4,5-tetrahydropyridine-2,6-dicarboxylate N-acetyltransferase (236 aa).

It belongs to the transferase hexapeptide repeat family. DapH subfamily.

It catalyses the reaction (S)-2,3,4,5-tetrahydrodipicolinate + acetyl-CoA + H2O = L-2-acetamido-6-oxoheptanedioate + CoA. It functions in the pathway amino-acid biosynthesis; L-lysine biosynthesis via DAP pathway; LL-2,6-diaminopimelate from (S)-tetrahydrodipicolinate (acetylase route): step 1/3. In terms of biological role, catalyzes the transfer of an acetyl group from acetyl-CoA to tetrahydrodipicolinate. This chain is 2,3,4,5-tetrahydropyridine-2,6-dicarboxylate N-acetyltransferase, found in Clostridium botulinum (strain ATCC 19397 / Type A).